A 23-amino-acid chain; its full sequence is Dermaseptin-4 (23 aa).

Position 23 is a glutamine amide (Gln-23).

As to expression, expressed by the skin glands.

It is found in the secreted. Its function is as follows. Antimicrobial peptide, active against the Gram-positive bacterium S.aureus, and the Gram-negative bacteria E.coli and P.aeruginosa. Has hemolytic activity (5% hemolysis at 128 ug/ml). The chain is Dermaseptin-4 from Phyllomedusa tarsius (Brownbelly leaf frog).